Here is a 209-residue protein sequence, read N- to C-terminus: Proteasome subunit beta (209 aa).

The propeptide at 1 to 10 is removed in mature form; by autocatalysis; sequence MVEQSDTMKG. T11 functions as the Nucleophile in the catalytic mechanism.

This sequence belongs to the peptidase T1B family. As to quaternary structure, the 20S proteasome core is composed of 14 alpha and 14 beta subunits that assemble into four stacked heptameric rings, resulting in a barrel-shaped structure. The two inner rings, each composed of seven catalytic beta subunits, are sandwiched by two outer rings, each composed of seven alpha subunits. The catalytic chamber with the active sites is on the inside of the barrel. Has a gated structure, the ends of the cylinder being occluded by the N-termini of the alpha-subunits. Is capped at one or both ends by the proteasome regulatory ATPase, PAN.

Its subcellular location is the cytoplasm. The catalysed reaction is Cleavage of peptide bonds with very broad specificity.. With respect to regulation, the formation of the proteasomal ATPase PAN-20S proteasome complex, via the docking of the C-termini of PAN into the intersubunit pockets in the alpha-rings, triggers opening of the gate for substrate entry. Interconversion between the open-gate and close-gate conformations leads to a dynamic regulation of the 20S proteasome proteolysis activity. Its function is as follows. Component of the proteasome core, a large protease complex with broad specificity involved in protein degradation. This Methanospirillum hungatei JF-1 (strain ATCC 27890 / DSM 864 / NBRC 100397 / JF-1) protein is Proteasome subunit beta.